The sequence spans 586 residues: Membrane protein insertase YidC (586 aa).

Transmembrane regions (helical) follow at residues 5–25 (TLIG…LMAP), 371–391 (GVII…LTMA), 436–456 (LGGC…FYVF), 486–506 (IPLY…AVFF), and 522–542 (FMMY…PSGL).

The protein belongs to the OXA1/ALB3/YidC family. Type 1 subfamily. As to quaternary structure, interacts with the Sec translocase complex via SecD. Specifically interacts with transmembrane segments of nascent integral membrane proteins during membrane integration.

It localises to the cell inner membrane. Its function is as follows. Required for the insertion and/or proper folding and/or complex formation of integral membrane proteins into the membrane. Involved in integration of membrane proteins that insert both dependently and independently of the Sec translocase complex, as well as at least some lipoproteins. Aids folding of multispanning membrane proteins. The polypeptide is Membrane protein insertase YidC (Chloroherpeton thalassium (strain ATCC 35110 / GB-78)).